Consider the following 319-residue polypeptide: R-phycoerythrin gamma chain, chloroplastic (319 aa).

The transit peptide at 1–71 (MDSPAFAVTG…RPKKLASYKR (71 aa)) directs the protein to the chloroplast. Phycourobilin contacts are provided by Cys96 and Cys135. Cys212 contacts (2R,3E)-phycoerythrobilin. Cys299 lines the phycourobilin pocket.

As to quaternary structure, heteromer of 4 alpha, 4 beta and one gamma chains. In terms of processing, contains four covalently linked bilin chromophores.

It is found in the plastid. Its subcellular location is the chloroplast thylakoid membrane. The protein is R-phycoerythrin gamma chain, chloroplastic of Corallina officinalis (Coral seaweed).